Reading from the N-terminus, the 410-residue chain is Phospho-N-acetylmuramoyl-pentapeptide-transferase (410 aa).

The next 10 membrane-spanning stretches (helical) occupy residues 27–47, 77–97, 99–119, 140–160, 213–233, 248–268, 288–308, 312–332, 337–357, and 389–409; these read RMIL…PYFI, TPTM…VLWM, LTHI…LIGG, LFFQ…SSVN, PVVT…FFVI, GLLA…AFVS, IAIY…YNGY, VFMG…SAVL, FLLG…ILQV, and VIRF…SLKF.

It belongs to the glycosyltransferase 4 family. MraY subfamily. Mg(2+) serves as cofactor.

The protein resides in the cell inner membrane. The enzyme catalyses UDP-N-acetyl-alpha-D-muramoyl-L-alanyl-gamma-D-glutamyl-meso-2,6-diaminopimeloyl-D-alanyl-D-alanine + di-trans,octa-cis-undecaprenyl phosphate = di-trans,octa-cis-undecaprenyl diphospho-N-acetyl-alpha-D-muramoyl-L-alanyl-D-glutamyl-meso-2,6-diaminopimeloyl-D-alanyl-D-alanine + UMP. It participates in cell wall biogenesis; peptidoglycan biosynthesis. Its function is as follows. Catalyzes the initial step of the lipid cycle reactions in the biosynthesis of the cell wall peptidoglycan: transfers peptidoglycan precursor phospho-MurNAc-pentapeptide from UDP-MurNAc-pentapeptide onto the lipid carrier undecaprenyl phosphate, yielding undecaprenyl-pyrophosphoryl-MurNAc-pentapeptide, known as lipid I. The polypeptide is Phospho-N-acetylmuramoyl-pentapeptide-transferase (Protochlamydia amoebophila (strain UWE25)).